Here is a 34-residue protein sequence, read N- to C-terminus: Delta-theraphotoxin-Hm1b (34 aa).

Intrachain disulfides connect C2–C16, C9–C21, and C15–C28. Residue F34 is modified to Phenylalanine amide.

It belongs to the neurotoxin 10 (Hwtx-1) family. 09 (HaTx) subfamily. As to expression, expressed by the venom gland.

Its subcellular location is the secreted. Gating-modifier toxin that potently and selectively acts on Nav1.1/SCN1A and Nav1.3/SCN3A. It enhances hNav1.1/SCN1A currents and delays fast inactivation of the channel (EC(50)=11.6 nM), leading to a sustained current. Similar effects are observed at Nav1.3/SCN3A (EC(50)=11.8 nM), but with less sustained currents. When tested on Nav1.2/SCN2A, the native toxin decreases the peak current by 50% at saturating concentration, whereas the recombinant toxin only shows a weak decrease of peak current. The native toxin specifically activates the voltage-gated sodium channel Nav1.1/SCN1A in somatosensory neurons to elicit acute pain and mechanical allodynia. When tested on Nav1.1/SCN1A, the toxin induces a hyperpolarising shift of the voltage-dependence of steady-state activation, and induces a depolarizing shift in the voltage dependence of inactivation. In addition, it does not modify the recovery from fast inactivation in Nav1.1/SCN1A. The toxin hydrophobic face probably interacts with the domain IV voltage-sensor of Nav1.1/SCN1A and Nav1.3/SCN3A and may trap the voltage-sensing S4 helix in a partially activated state. In vivo, intracerebroventricular injection into mice elicits convulsions, spasms, tremors and rapid death. When injected into mouse hindpaw, the toxin elicits an immediate and robust response to pain. However, intraplantar injection of toxin does not cause neurogenic inflammation or alter sensitivity to heat, indicative of a modality-specific effect on mechanosensitive neurons. This is Delta-theraphotoxin-Hm1b from Heteroscodra maculata (Togo starburst tarantula).